Reading from the N-terminus, the 323-residue chain is NADH-ubiquinone oxidoreductase chain 1 (323 aa).

The next 8 membrane-spanning stretches (helical) occupy residues 4–24 (LFTVLELLSFLVPVLLAVAFL), 73–93 (YLFFLSPLLFMALALLLWNLM), 106–126 (LLLVLGLSSLSVYAILGSGWA), 150–170 (LALILLSLIIITSSFNLTYIM), 175–195 (FSWFALSCLPLFYIWFVSTLA), 226–246 (LFFIAEYANIILMNLFSVVIF), 256–276 (LFPLNVLTIGLKTTLLVFLFL), and 303–323 (IGALCATITIVLTLGIYLPLF).

The protein belongs to the complex I subunit 1 family.

It is found in the mitochondrion inner membrane. The enzyme catalyses a ubiquinone + NADH + 5 H(+)(in) = a ubiquinol + NAD(+) + 4 H(+)(out). Functionally, core subunit of the mitochondrial membrane respiratory chain NADH dehydrogenase (Complex I) that is believed to belong to the minimal assembly required for catalysis. Complex I functions in the transfer of electrons from NADH to the respiratory chain. The immediate electron acceptor for the enzyme is believed to be ubiquinone. This is NADH-ubiquinone oxidoreductase chain 1 (ND1) from Paracentrotus lividus (Common sea urchin).